Reading from the N-terminus, the 700-residue chain is Translation initiation factor IF-2 (700 aa).

The disordered stretch occupies residues 58 to 85; it reads KKEVKKQKEPSKEKGKSSEQVKVKEKSK. The tr-type G domain maps to 191 to 365; the sequence is PRPPVVTIMG…EMQEIRCIPD (175 aa). The G1 stretch occupies residues 200-207; that stretch reads GHVDHGKT. 200–207 contacts GTP; that stretch reads GHVDHGKT. A G2 region spans residues 225–229; that stretch reads GITQS. The segment at 246–249 is G3; the sequence is DTPG. GTP contacts are provided by residues 246–250 and 300–303; these read DTPGH and NKID. The interval 300 to 303 is G4; sequence NKID. Positions 337-339 are G5; sequence SAK.

This sequence belongs to the TRAFAC class translation factor GTPase superfamily. Classic translation factor GTPase family. IF-2 subfamily.

The protein localises to the cytoplasm. One of the essential components for the initiation of protein synthesis. Protects formylmethionyl-tRNA from spontaneous hydrolysis and promotes its binding to the 30S ribosomal subunits. Also involved in the hydrolysis of GTP during the formation of the 70S ribosomal complex. This Petrotoga mobilis (strain DSM 10674 / SJ95) protein is Translation initiation factor IF-2.